Reading from the N-terminus, the 718-residue chain is Ribosomal RNA large subunit methyltransferase K/L (718 aa).

The THUMP domain maps to 43 to 154 (TQYRILLWSR…QDELVVSLDL (112 aa)).

This sequence belongs to the methyltransferase superfamily. RlmKL family.

The protein localises to the cytoplasm. The catalysed reaction is guanosine(2445) in 23S rRNA + S-adenosyl-L-methionine = N(2)-methylguanosine(2445) in 23S rRNA + S-adenosyl-L-homocysteine + H(+). It carries out the reaction guanosine(2069) in 23S rRNA + S-adenosyl-L-methionine = N(2)-methylguanosine(2069) in 23S rRNA + S-adenosyl-L-homocysteine + H(+). Specifically methylates the guanine in position 2445 (m2G2445) and the guanine in position 2069 (m7G2069) of 23S rRNA. In Histophilus somni (strain 2336) (Haemophilus somnus), this protein is Ribosomal RNA large subunit methyltransferase K/L.